We begin with the raw amino-acid sequence, 208 residues long: Germin-like protein subfamily 3 member 1 (208 aa).

Residues 1–18 form the signal peptide; that stretch reads MLRTIFLLSLLFALSNAS. Cys-23 and Cys-38 form a disulfide bridge. Residues 52 to 198 enclose the Cupin type-1 domain; that stretch reads SGLGTPGNTT…TTFLDATTVK (147 aa). Asn-59 carries an N-linked (GlcNAc...) asparagine glycan. His-100, His-102, Glu-107, and His-146 together coordinate Mn(2+).

Belongs to the germin family. In terms of assembly, may not form oligomer. In terms of tissue distribution, expressed during germination, and also in green shoots, etiolated seedlings and whole seedlings.

The protein localises to the secreted. Its subcellular location is the extracellular space. It is found in the apoplast. May play a role in plant defense. Probably has no oxalate oxidase activity even if the active site is conserved. The protein is Germin-like protein subfamily 3 member 1 (GLP1) of Arabidopsis thaliana (Mouse-ear cress).